A 386-amino-acid polypeptide reads, in one-letter code: Chaperone protein DnaJ (386 aa).

The region spanning 3–68 (DYYEILEVAR…KKRQVYDRYG (66 aa)) is the J domain. A CR-type zinc finger spans residues 146 to 224 (GVDKELVISN…CKGQGAVKEK (79 aa)). Zn(2+) is bound by residues Cys-159, Cys-162, Cys-176, Cys-179, Cys-198, Cys-201, Cys-212, and Cys-215. CXXCXGXG motif repeat units lie at residues 159–166 (CNVCNGKG), 176–183 (CSECKGRG), 198–205 (CPKCHGEG), and 212–219 (CKNCKGQG).

This sequence belongs to the DnaJ family. In terms of assembly, homodimer. The cofactor is Zn(2+).

The protein localises to the cytoplasm. In terms of biological role, participates actively in the response to hyperosmotic and heat shock by preventing the aggregation of stress-denatured proteins and by disaggregating proteins, also in an autonomous, DnaK-independent fashion. Unfolded proteins bind initially to DnaJ; upon interaction with the DnaJ-bound protein, DnaK hydrolyzes its bound ATP, resulting in the formation of a stable complex. GrpE releases ADP from DnaK; ATP binding to DnaK triggers the release of the substrate protein, thus completing the reaction cycle. Several rounds of ATP-dependent interactions between DnaJ, DnaK and GrpE are required for fully efficient folding. Also involved, together with DnaK and GrpE, in the DNA replication of plasmids through activation of initiation proteins. The polypeptide is Chaperone protein DnaJ (Protochlamydia amoebophila (strain UWE25)).